We begin with the raw amino-acid sequence, 294 residues long: Deubiquitinase OTUD6B (294 aa).

Met-1 is modified (N-acetylmethionine). In terms of domain architecture, OTU spans 148-285 (LEIKQIPSDG…GEHYNSVTRL (138 aa)). Residues 153–159 (IPSDGHC) form a cys-loop region. The active site involves Asp-156. Catalysis depends on Cys-159, which acts as the Nucleophile. Positions 220-230 (IVNTAAWGGQL) are variable-loop. The interval 268–278 (YMRHAYGLGEH) is his-loop. The active site involves His-278.

As to quaternary structure, interacts with the eukaryotic translation initiation factor 4F complex. In terms of tissue distribution, ubiquitously expressed. Expression is observed in several organ systems including the cardiovascular, digestive, central and peripheral nervous and musculoskeletal systems.

The catalysed reaction is Thiol-dependent hydrolysis of ester, thioester, amide, peptide and isopeptide bonds formed by the C-terminal Gly of ubiquitin (a 76-residue protein attached to proteins as an intracellular targeting signal).. Functionally, deubiquitinating enzyme that may play a role in the ubiquitin-dependent regulation of protein synthesis, downstream of mTORC1. May associate with the protein synthesis initiation complex and modify its ubiquitination to repress translation. May also repress DNA synthesis and modify different cellular targets thereby regulating cell growth and proliferation. May also play a role in proteasome assembly and function. In Mus musculus (Mouse), this protein is Deubiquitinase OTUD6B.